The chain runs to 358 residues: MNPFPRAEISSSALQTNLAALRQQAPASRVMAVVKANGYGHGLLNVAHCLVSADGFGLARLDEALELRAGGVTARLLLLEGFFRATDLPLLVGHDIDTVVHHSSQLEMLEQTVLSKPVTVWLKVDSGMHRLGFTPEQFSTVYDRLMACPNVAKPIHLMTHFACADEPDNTYTSVQMAAFNSLTAGLPGFRTLANSAGALYWPQSQGDWIRPGIALYGVSPVTGDCGANHGLVPAMELVSQLIAVRDHKANQPVGYGCFWTAKQDTRLGVVAIGYGDGYPRNAPEGTPVWVNGRRVPIVGRVSMDMLTVDLGQDAQDKVGDSALLWGKALPVEEVAEHIGTIAYELVTKLTPRVAVCLA.

The active-site Proton acceptor; specific for D-alanine is the Lys-35. Lys-35 carries the post-translational modification N6-(pyridoxal phosphate)lysine. A substrate-binding site is contributed by Arg-130. Tyr-255 serves as the catalytic Proton acceptor; specific for L-alanine. Met-303 is a substrate binding site.

Belongs to the alanine racemase family. It depends on pyridoxal 5'-phosphate as a cofactor.

The catalysed reaction is L-alanine = D-alanine. Its pathway is amino-acid biosynthesis; D-alanine biosynthesis; D-alanine from L-alanine: step 1/1. Functionally, catalyzes the interconversion of L-alanine and D-alanine. May also act on other amino acids. The polypeptide is Alanine racemase (alr) (Shewanella baltica (strain OS223)).